The following is a 149-amino-acid chain: Ribosomal RNA large subunit methyltransferase H (149 aa).

S-adenosyl-L-methionine contacts are provided by residues leucine 71, glycine 98, and 117–122 (LSKLTL).

It belongs to the RNA methyltransferase RlmH family. Homodimer.

The protein resides in the cytoplasm. The catalysed reaction is pseudouridine(1915) in 23S rRNA + S-adenosyl-L-methionine = N(3)-methylpseudouridine(1915) in 23S rRNA + S-adenosyl-L-homocysteine + H(+). Its function is as follows. Specifically methylates the pseudouridine at position 1915 (m3Psi1915) in 23S rRNA. In Campylobacter jejuni subsp. doylei (strain ATCC BAA-1458 / RM4099 / 269.97), this protein is Ribosomal RNA large subunit methyltransferase H.